A 266-amino-acid polypeptide reads, in one-letter code: Signal peptidase I (266 aa).

Residues 1–20 lie on the Cytoplasmic side of the membrane; that stretch reads MQTDNTKSNTNKTAKQEWGS. A helical transmembrane segment spans residues 21–41; the sequence is FVFVICIALLIRILIMEPFTV. The Periplasmic segment spans residues 42–266; it reads PTGSMKATIL…IFRNLYNTDV (225 aa). Residues S45 and K108 contribute to the active site.

It belongs to the peptidase S26 family.

The protein resides in the cell inner membrane. The enzyme catalyses Cleavage of hydrophobic, N-terminal signal or leader sequences from secreted and periplasmic proteins.. This Rickettsia massiliae (strain Mtu5) protein is Signal peptidase I (lepB).